A 972-amino-acid polypeptide reads, in one-letter code: Protein NRDE2 homolog (972 aa).

A compositionally biased stretch (polar residues) spans 1–17 (MPSNHNTSVPKFSSFNS). The interval 1–61 (MPSNHNTSVP…RSIQSNFAVD (61 aa)) is disordered. The segment covering 19–33 (KAKKNPITKSNKKYR) has biased composition (basic residues). Positions 37-59 (DQVSSNHAKSSFPSHRSIQSNFA) are enriched in polar residues. 7 HAT repeats span residues 159 to 191 (LNIL…YQER), 250 to 282 (WSKE…YFTG), 318 to 350 (TDVT…YELA), 355 to 386 (QANM…FWNS), 608 to 640 (EEKP…LEHL), 788 to 820 (YNLP…FESK), and 860 to 894 (TNSQ…ILNL). Ser970 carries the phosphoserine modification.

This sequence belongs to the NRDE2 family.

Its subcellular location is the nucleus. This is Protein NRDE2 homolog from Schizosaccharomyces pombe (strain 972 / ATCC 24843) (Fission yeast).